Consider the following 309-residue polypeptide: Lipoyl synthase (309 aa).

Positions 56, 61, 67, 82, 86, 89, and 296 each coordinate [4Fe-4S] cluster. Residues 68-285 (FKRGTATFMI…RVAGLKMGFS (218 aa)) form the Radical SAM core domain.

This sequence belongs to the radical SAM superfamily. Lipoyl synthase family. [4Fe-4S] cluster serves as cofactor.

Its subcellular location is the cytoplasm. It carries out the reaction [[Fe-S] cluster scaffold protein carrying a second [4Fe-4S](2+) cluster] + N(6)-octanoyl-L-lysyl-[protein] + 2 oxidized [2Fe-2S]-[ferredoxin] + 2 S-adenosyl-L-methionine + 4 H(+) = [[Fe-S] cluster scaffold protein] + N(6)-[(R)-dihydrolipoyl]-L-lysyl-[protein] + 4 Fe(3+) + 2 hydrogen sulfide + 2 5'-deoxyadenosine + 2 L-methionine + 2 reduced [2Fe-2S]-[ferredoxin]. It functions in the pathway protein modification; protein lipoylation via endogenous pathway; protein N(6)-(lipoyl)lysine from octanoyl-[acyl-carrier-protein]: step 2/2. Functionally, catalyzes the radical-mediated insertion of two sulfur atoms into the C-6 and C-8 positions of the octanoyl moiety bound to the lipoyl domains of lipoate-dependent enzymes, thereby converting the octanoylated domains into lipoylated derivatives. The polypeptide is Lipoyl synthase (Syntrophotalea carbinolica (strain DSM 2380 / NBRC 103641 / GraBd1) (Pelobacter carbinolicus)).